Consider the following 336-residue polypeptide: Glucokinase (336 aa).

13-18 (ADVGGT) lines the ATP pocket.

This sequence belongs to the bacterial glucokinase family.

The protein resides in the cytoplasm. The catalysed reaction is D-glucose + ATP = D-glucose 6-phosphate + ADP + H(+). This Cupriavidus metallidurans (strain ATCC 43123 / DSM 2839 / NBRC 102507 / CH34) (Ralstonia metallidurans) protein is Glucokinase.